The sequence spans 198 residues: MTIKLELLEAALRNALGDQLQSLTQALGEVTIVVKSHDYASAMRVLRDHADLRFEEMIDLCGVDYSTYGDGLWEGPRFAVVSHLLSIKHNWRVRVRVFAADDEMPVVASMIDIWATANWYEREAFDFFGILFEGHNDLRRILTDYGFIGHPFRKDFPVSGYVEMRYDPEQKRVIYQPVTIDPRENVPRVIREEQYGAK.

The protein belongs to the complex I 30 kDa subunit family. As to quaternary structure, NDH-1 is composed of 14 different subunits. Subunits NuoB, C, D, E, F, and G constitute the peripheral sector of the complex.

Its subcellular location is the cell inner membrane. It carries out the reaction a quinone + NADH + 5 H(+)(in) = a quinol + NAD(+) + 4 H(+)(out). NDH-1 shuttles electrons from NADH, via FMN and iron-sulfur (Fe-S) centers, to quinones in the respiratory chain. The immediate electron acceptor for the enzyme in this species is believed to be ubiquinone. Couples the redox reaction to proton translocation (for every two electrons transferred, four hydrogen ions are translocated across the cytoplasmic membrane), and thus conserves the redox energy in a proton gradient. This is NADH-quinone oxidoreductase subunit C from Janthinobacterium sp. (strain Marseille) (Minibacterium massiliensis).